Reading from the N-terminus, the 355-residue chain is Heterogeneous nuclear ribonucleoprotein D0 (355 aa).

The segment at Met1 to Ala92 is disordered. Residue Ser2 is modified to N-acetylserine. Low complexity-rich tracts occupy residues Ala11–Gly20 and Glu27–Gly42. Positions Ser43–Gly58 are enriched in gly residues. Residues Glu64–Asn73 are compositionally biased toward basic and acidic residues. Ser71 is modified (phosphoserine). Lys72 participates in a covalent cross-link: Glycyl lysine isopeptide (Lys-Gly) (interchain with G-Cter in SUMO2). A phosphoserine mark is found at Ser80, Ser82, and Ser83. Thr91 is modified (phosphothreonine). RRM domains are found at residues Trp97–Glu179 and Lys182–Glu261. Lys119 is subject to N6-methyllysine. A Phosphothreonine modification is found at Thr127. Lys129 participates in a covalent cross-link: Glycyl lysine isopeptide (Lys-Gly) (interchain with G-Cter in SUMO2). An N6-acetyllysine modification is found at Lys165. A Phosphoserine modification is found at Ser190. A Phosphothreonine modification is found at Thr193. Lys197 participates in a covalent cross-link: Glycyl lysine isopeptide (Lys-Gly) (interchain with G-Cter in SUMO2). An N6-acetyllysine mark is found at Lys243 and Lys251. At Tyr263 the chain carries Omega-N-methylarginine. Ser271 is modified (phosphoserine). Arg272 is modified (omega-N-methylarginine). At Gly273 the chain carries N6-acetyllysine. Arg278, Arg280, and Arg282 each carry omega-N-methylarginine. Gln292 carries the post-translational modification N6-acetyllysine. Residue Arg345 is modified to Asymmetric dimethylarginine; alternate. A Dimethylated arginine; alternate modification is found at Arg345. Residue Arg345 is modified to Omega-N-methylarginine; alternate.

As to quaternary structure, identified in a IGF2BP1-dependent mRNP granule complex containing untranslated mRNAs. Part of a complex associated with the FOS mCRD domain and consisting of PABPC1, PAIP1, CSDE1/UNR and SYNCRIP. Interacts with IGF2BP2. Interacts with GTPBP1. Interacts with EIF4G1; the interaction requires RNA. Interacts with EIF3B and RPS3. Arg-345 is dimethylated, probably to asymmetric dimethylarginine. In terms of processing, methylated by PRMT1, in an insulin-dependent manner. The PRMT1-mediated methylation regulates tyrosine phosphorylation.

It localises to the nucleus. It is found in the cytoplasm. In terms of biological role, binds with high affinity to RNA molecules that contain AU-rich elements (AREs) found within the 3'-UTR of many proto-oncogenes and cytokine mRNAs. Also binds to double- and single-stranded DNA sequences in a specific manner and functions a transcription factor. Each of the RNA-binding domains specifically can bind solely to a single-stranded non-monotonous 5'-UUAG-3' sequence and also weaker to the single-stranded 5'-TTAGGG-3' telomeric DNA repeat. Binds RNA oligonucleotides with 5'-UUAGGG-3' repeats more tightly than the telomeric single-stranded DNA 5'-TTAGGG-3' repeats. Binding of RRM1 to DNA inhibits the formation of DNA quadruplex structure which may play a role in telomere elongation. May be involved in translationally coupled mRNA turnover. Implicated with other RNA-binding proteins in the cytoplasmic deadenylation/translational and decay interplay of the FOS mRNA mediated by the major coding-region determinant of instability (mCRD) domain. May play a role in the regulation of the rhythmic expression of circadian clock core genes. Directly binds to the 3'UTR of CRY1 mRNA and induces CRY1 rhythmic translation. May also be involved in the regulation of PER2 translation. The protein is Heterogeneous nuclear ribonucleoprotein D0 (HNRNPD) of Homo sapiens (Human).